A 494-amino-acid chain; its full sequence is Xylan glycosyltransferase MUCI21 (494 aa).

The Cytoplasmic portion of the chain corresponds to 1-40; sequence MRQNLKKVAQIKVDESKKLFPYVFRVKTSCGNCAKRSKPK. Residues 41-61 form a helical; Signal-anchor for type II membrane protein membrane-spanning segment; sequence LIYLLIFSLISSCFVFAPQLL. The Lumenal portion of the chain corresponds to 62–494; the sequence is CFPYPSALFL…LIDAYAKSIR (433 aa). Residue Asn375 is glycosylated (N-linked (GlcNAc...) asparagine).

It belongs to the glycosyltransferase 61 family.

It is found in the golgi apparatus membrane. Its function is as follows. Glycosyletransferase required for the proper composition and structural properties of released seed coat mucilage. Required for the production of highly branched xylan polymers in seed coat mucilage. Facilitates the addition of xylose residues directly to the xylan backbone. Xylan with xylose side chains seems to be necessary for pectin attachment to the seed surface. Essential for xylan synthesis in seed coat epidermal (SCE) cells. The chain is Xylan glycosyltransferase MUCI21 from Arabidopsis thaliana (Mouse-ear cress).